Consider the following 274-residue polypeptide: Penicillin-insensitive murein endopeptidase (274 aa).

The N-terminal stretch at 1–19 (MNKTAIALLALLASSASLA) is a signal peptide. Intrachain disulfides connect C44/C265, C187/C235, and C216/C223. Residues H110, H113, D120, D147, H150, and H211 each contribute to the Zn(2+) site. The tract at residues 227–274 (PLPPPGDGCGAELQSWFEPPKPGTTKPEKKTPPPLPPSCQALLDEHVI) is disordered.

This sequence belongs to the peptidase M74 family. As to quaternary structure, dimer. Requires Zn(2+) as cofactor.

The protein localises to the periplasm. Murein endopeptidase that cleaves the D-alanyl-meso-2,6-diamino-pimelyl amide bond that connects peptidoglycan strands. Likely plays a role in the removal of murein from the sacculus. This is Penicillin-insensitive murein endopeptidase from Escherichia coli O6:K15:H31 (strain 536 / UPEC).